We begin with the raw amino-acid sequence, 566 residues long: Liver carboxylesterase 1 (566 aa).

A signal peptide spans 1–18; it reads MWLRALVLATLAAFTAWG. A glycan (N-linked (GlcNAc...) asparagine) is linked at N79. C87 and C116 are oxidised to a cystine. S221 serves as the catalytic Acyl-ester intermediate. A disulfide bridge connects residues C274 and C285. E354 acts as the Charge relay system in catalysis. S379 carries the post-translational modification Phosphoserine. Catalysis depends on H467, which acts as the Charge relay system.

This sequence belongs to the type-B carboxylesterase/lipase family. Homotrimer and homohexamer. Binds to beta-glucuronidase.

It localises to the endoplasmic reticulum lumen. It is found in the cytoplasm. The protein localises to the lipid droplet. The enzyme catalyses a carboxylic ester + H2O = an alcohol + a carboxylate + H(+). It catalyses the reaction cholesteryl (9Z-octadecenoate) + H2O = cholesterol + (9Z)-octadecenoate + H(+). The catalysed reaction is 2-(5Z,8Z,11Z,14Z-eicosatetraenoyl)-glycerol + H2O = glycerol + (5Z,8Z,11Z,14Z)-eicosatetraenoate + H(+). It carries out the reaction prostaglandin E2 1-glyceryl ester + H2O = prostaglandin E2 + glycerol + H(+). The enzyme catalyses a cholesterol ester + H2O = cholesterol + a fatty acid + H(+). It catalyses the reaction prostaglandin F2alpha 1-glyceryl ester + H2O = prostaglandin F2alpha + glycerol + H(+). Functionally, involved in the detoxification of xenobiotics and in the activation of ester and amide prodrugs. Hydrolyzes aromatic and aliphatic esters, but has no catalytic activity toward amides or a fatty acyl-CoA ester. Displays fatty acid ethyl ester synthase activity, catalyzing the ethyl esterification of oleic acid to ethyloleate. Converts monoacylglycerides to free fatty acids and glycerol. Hydrolyzes of 2-arachidonoylglycerol and prostaglandins. Hydrolyzes cellular cholesteryl esters to free cholesterols and promotes reverse cholesterol transport (RCT) by facilitating both the initial and final steps in the process. First of all, allows free cholesterol efflux from macrophages to extracellular cholesterol acceptors and secondly, releases free cholesterol from lipoprotein-delivered cholesteryl esters in the liver for bile acid synthesis or direct secretion into the bile. In Macaca fascicularis (Crab-eating macaque), this protein is Liver carboxylesterase 1.